The primary structure comprises 307 residues: Beta-lactamase (307 aa).

An N-terminal signal peptide occupies residues 1–26 (MKLWFSTLKLKKAAAVLLFSCVALAG). Cys-27 is lipidated: N-palmitoyl cysteine. The S-diacylglycerol cysteine moiety is linked to residue Cys-27. Ser-86 serves as the catalytic Acyl-ester intermediate. Residue Glu-182 is the Proton acceptor of the active site. 248–250 (KTG) lines the substrate pocket.

It belongs to the class-A beta-lactamase family. Large exopenicillinase is the primary secretion product; it can be converted to small exopenicillinase.

It localises to the cell membrane. The enzyme catalyses a beta-lactam + H2O = a substituted beta-amino acid. This chain is Beta-lactamase (penP), found in Bacillus licheniformis.